The chain runs to 351 residues: Putative F-box protein At5g52610 (351 aa).

Positions 1-41 constitute an F-box domain; it reads MISEDLLVEILLRLPVKPLARCLCVCKLWATIIRSRYFINL.

The chain is Putative F-box protein At5g52610 from Arabidopsis thaliana (Mouse-ear cress).